A 198-amino-acid chain; its full sequence is Guanylate kinase (198 aa).

N-acetylglycine is present on Gly2. A Guanylate kinase-like domain is found at 4 to 186 (PRPVVLSGPS…AYWALKEALS (183 aa)). 14 to 19 (GAGKST) contacts ATP. 37-51 (SHTTRDPRPGEENGK) contributes to the substrate binding site. Residues Arg44, Arg137, and Arg148 contribute to the active site. 171–172 (ND) contacts ATP.

The protein belongs to the guanylate kinase family. In terms of assembly, monomer. Interacts with RD3.

It localises to the photoreceptor inner segment. Its subcellular location is the cytoplasm. It is found in the cytosol. The catalysed reaction is GMP + ATP = GDP + ADP. Up-regulated by RD3. Catalyzes the phosphorylation of GMP to GDP. Essential enzyme for recycling GMP and indirectly, cyclic GMP (cGMP). Involved in the cGMP metabolism in photoreceptors. This Sus scrofa (Pig) protein is Guanylate kinase (GUK1).